Here is a 106-residue protein sequence, read N- to C-terminus: Large ribosomal subunit protein uL24 (106 aa).

The protein belongs to the universal ribosomal protein uL24 family. In terms of assembly, part of the 50S ribosomal subunit.

Its function is as follows. One of two assembly initiator proteins, it binds directly to the 5'-end of the 23S rRNA, where it nucleates assembly of the 50S subunit. Functionally, one of the proteins that surrounds the polypeptide exit tunnel on the outside of the subunit. In Blochmanniella pennsylvanica (strain BPEN), this protein is Large ribosomal subunit protein uL24.